The following is a 171-amino-acid chain: Tetratricopeptide repeat protein 9C (171 aa).

TPR repeat units lie at residues 8–41 (AQVYKEEGNQRYREGKYRDAVSRYHRALLQLRGL), 72–107 (THCYNNLAACLLQMEPVNYERVREYSQKVLERQPDN), and 108–141 (AKALYRAGVAFFHLQDYDRARHHLLAAVNRQPKD).

Belongs to the TTC9 family.

The protein is Tetratricopeptide repeat protein 9C (Ttc9c) of Mus musculus (Mouse).